The sequence spans 181 residues: MALTKARKAERIETLAKELEHSTSAIIGTFAKLTVSQDFELRQKVRAAGGRYRVVKNKLAARASKGTQIEAALQGLKGVSSVAYTSGDPVALAKAMADWVKENAEFTFKLGIVDGKVITVEEVDQLAKMPGKEEIFSKLLYLINAPAQRLATVMAATGRDLAVVINQGVEKGKFSGEQASA.

Belongs to the universal ribosomal protein uL10 family. In terms of assembly, part of the ribosomal stalk of the 50S ribosomal subunit. The N-terminus interacts with L11 and the large rRNA to form the base of the stalk. The C-terminus forms an elongated spine to which L12 dimers bind in a sequential fashion forming a multimeric L10(L12)X complex.

In terms of biological role, forms part of the ribosomal stalk, playing a central role in the interaction of the ribosome with GTP-bound translation factors. The polypeptide is Large ribosomal subunit protein uL10 (Acidobacterium capsulatum (strain ATCC 51196 / DSM 11244 / BCRC 80197 / JCM 7670 / NBRC 15755 / NCIMB 13165 / 161)).